Here is an 800-residue protein sequence, read N- to C-terminus: MAGHMLMPLRRRPWTCRACLQRLQQPRRSLETAASPSSQSDVYDYAPTNHSTQKKSNDETLRRVFDSQPFWREFSQRSATQSKPTGLVQNQYLTNPDGFRAFANVSLQRCQAIVAKVLAASTLEEYRDMARDLDRLSDLLCRVIDLSDFIRVIHPDPRVQEAATQAYALMFEYMNVLNTTTGLNDQLKKAASNPDVTSYWSEEEKIVAQILIKDFSNSAIHMPPNERQRFVNLSNDISQLGSNFVNSAEPAKSQVVVGANSLRGLDPILVQQIRRWNRTASVPTTGMIPRLALRSVHDEGVRREVYLATRTSSSRQLHRLEELLSKRAELAQLSGHASFGHMTLSDKMAKSPEAVSNFLTALVGSNREYVQEELSKLQAMKGGSPLQPWDHAYYVHQRVLQYSQSRRSRELSAVPEFFSLGTVMQGLSRLFDRLYGVRLVPQETAAGETWNPDVRRLDVVDEAERHIAVIYCDLFSRPNKHPNPAHFTLRCAREISSEEVAECATMDHSAHPNDGMATAVDPQSKTLRQLPTIALVCDFAEPPATGAGRPSLLSEHSVRTLFHEMGHALHSILGQTRLQSISGTRCATDFAELPSVLMERFATEPAVLSMYARHWQTDQPLSESMMLSMEKDRLAHGSIYGAVENEAQILMALVDQAYHSIPADKAGQIDSTAIYHQVSSAHSTLPDPTDSRPPTSWQGFFGHLYGYGATYYSYIFDRAIANKIWEDVFQAGKAAVDREAGERYKNEVLRWGGGRNGWDCVAGVLGSANAANANGRLAEGGDEAMREVGRWGLGRDGVSG.

The transit peptide at 1 to 23 directs the protein to the mitochondrion; sequence MAGHMLMPLRRRPWTCRACLQRL. Over residues 27 to 41 the composition is skewed to polar residues; the sequence is RRSLETAASPSSQSD. The segment at 27–59 is disordered; the sequence is RRSLETAASPSSQSDVYDYAPTNHSTQKKSNDE. His563 contributes to the Zn(2+) binding site. Glu564 is an active-site residue. Residues His567 and His570 each contribute to the Zn(2+) site.

The protein belongs to the peptidase M3 family. Zn(2+) serves as cofactor.

The protein localises to the mitochondrion matrix. The enzyme catalyses Release of an N-terminal octapeptide as second stage of processing of some proteins imported into the mitochondrion.. Cleaves proteins, imported into the mitochondrion, to their mature size. While most mitochondrial precursor proteins are processed to the mature form in one step by mitochondrial processing peptidase (MPP), the sequential cleavage by MIP of an octapeptide after initial processing by MPP is a required step for a subgroup of nuclear-encoded precursor proteins destined for the matrix or the inner membrane. The polypeptide is Mitochondrial intermediate peptidase (oct1) (Aspergillus oryzae (strain ATCC 42149 / RIB 40) (Yellow koji mold)).